The primary structure comprises 91 residues: Small ribosomal subunit protein bS16 (91 aa).

The protein belongs to the bacterial ribosomal protein bS16 family.

The protein is Small ribosomal subunit protein bS16 of Staphylococcus haemolyticus (strain JCSC1435).